Reading from the N-terminus, the 346-residue chain is Sensor protein kinase GraS (346 aa).

Helical transmembrane passes span 15 to 35 and 43 to 63; these read MNWI…SLID and LFYI…LTYF. Residues 126–332 form the Histidine kinase domain; the sequence is EFVHDIKTPV…TVRLIFPLQN (207 aa).

As to quaternary structure, interacts with GraX.

Its subcellular location is the cell membrane. It carries out the reaction ATP + protein L-histidine = ADP + protein N-phospho-L-histidine.. Functionally, member of the two-component regulatory system GraR/GraS involved in resistance against cationic antimicrobial peptides (CAMPs). Functions as a sensor protein kinase which phosphorylates GraR through the auxiliary protein GraX. In turn, GraR up-regulates many genes such as adhesins, exoproteins, transporters, toxins, and proteins involved in cell wall synthesis. Down-regulates the expression of many genes involved in RNA and amino acid synthesis or glycolysis. This is Sensor protein kinase GraS (graS) from Staphylococcus aureus (strain bovine RF122 / ET3-1).